A 154-amino-acid chain; its full sequence is MEKLPNTVVKVHGEGMESKLFPRKLHKDTNSILREDLVSACQEHIEALVEGMIAHGDGRKVAELDTSTQYYWHLKLVEYTPIPGRTQHYVDLVDGTNPDVCYFSLCDCSGDNITDRRWSNMVKRLQNPEEDIAKTLRCYFRQDAGMPSWIEYPQ.

The protein is Putative gene 41 protein (41) of Bacillus phage SP01 (Bacteriophage SP01).